The chain runs to 340 residues: Glycerol-3-phosphate dehydrogenase [NAD(P)+] (340 aa).

NADPH-binding residues include S13, W14, and K108. 3 residues coordinate sn-glycerol 3-phosphate: K108, G139, and S141. A143 serves as a coordination point for NADPH. The sn-glycerol 3-phosphate site is built by K194, D247, S257, R258, and N259. Catalysis depends on K194, which acts as the Proton acceptor. R258 is a binding site for NADPH. V282 and E284 together coordinate NADPH.

It belongs to the NAD-dependent glycerol-3-phosphate dehydrogenase family.

Its subcellular location is the cytoplasm. The catalysed reaction is sn-glycerol 3-phosphate + NAD(+) = dihydroxyacetone phosphate + NADH + H(+). The enzyme catalyses sn-glycerol 3-phosphate + NADP(+) = dihydroxyacetone phosphate + NADPH + H(+). It functions in the pathway membrane lipid metabolism; glycerophospholipid metabolism. Functionally, catalyzes the reduction of the glycolytic intermediate dihydroxyacetone phosphate (DHAP) to sn-glycerol 3-phosphate (G3P), the key precursor for phospholipid synthesis. The chain is Glycerol-3-phosphate dehydrogenase [NAD(P)+] from Streptococcus sanguinis (strain SK36).